The chain runs to 1032 residues: Unconventional myosin-Ih (1032 aa).

One can recognise a Myosin motor domain in the interval 12-701 (GVQDFVLLDA…TLFATEDAFE (690 aa)). ATP is bound at residue 105-112 (GESGAGKT). Position 365 is a phosphoserine (Ser365). The actin-binding stretch occupies residues 578 to 600 (LSSLLETLISKEPSYIRCIKPND). IQ domains lie at 704 to 726 (KHQL…EYVK) and 727 to 756 (KRQA…AVRI). One can recognise a TH1 domain in the interval 855-1029 (KDGYTESLNQ…NGQLTVVSVR (175 aa)).

The protein belongs to the TRAFAC class myosin-kinesin ATPase superfamily. Myosin family.

In terms of biological role, myosins are actin-based motor molecules with ATPase activity. Unconventional myosins serve in intracellular movements. Their highly divergent tails are presumed to bind to membranous compartments, which would be moved relative to actin filaments. The protein is Unconventional myosin-Ih (MYO1H) of Homo sapiens (Human).